We begin with the raw amino-acid sequence, 918 residues long: Interleukin-6 receptor subunit beta (918 aa).

Positions 1 to 22 (MSALRIWLMQALLIFLTTESIG) are cleaved as a signal peptide. The Extracellular portion of the chain corresponds to 23–618 (QLVEPCGYIY…TLKFAQGEIE (596 aa)). The Ig-like C2-type domain occupies 26–120 (EPCGYIYPEF…IEQNVYGITI (95 aa)). Intrachain disulfides connect Cys28–Cys54 and Cys48–Cys103. N-linked (GlcNAc...) asparagine glycosylation is found at Asn43, Asn61, Asn83, and Asn131. 5 Fibronectin type-III domains span residues 125 to 215 (PPDI…NFDP), 223 to 323 (PPHN…TYED), 328 to 418 (APSF…IPGS), 422 to 516 (ASHP…LKQA), and 518 to 612 (PSKG…TLKF). Cys134 and Cys144 are oxidised to a cystine. N-linked (GlcNAc...) asparagine glycosylation is present at Asn157. The cysteines at positions 172 and 181 are disulfide-linked. N-linked (GlcNAc...) asparagine glycans are attached at residues Asn205 and Asn226. Positions 309–313 (WSDWS) match the WSXWS motif motif. 2 N-linked (GlcNAc...) asparagine glycosylation sites follow: Asn382 and Asn389. Cysteines 457 and 465 form a disulfide. Residues Asn477 and Asn552 are each glycosylated (N-linked (GlcNAc...) asparagine). Residues 619 to 640 (AIVVPVCLAFLLTTLLGVLFCF) traverse the membrane as a helical segment. Residues 641–918 (NKRDLIKKHI…TVRQGGYMPQ (278 aa)) are Cytoplasmic-facing. Positions 650-658 (IWPNVPDPS) match the Box 1 motif motif. 4 disordered regions span residues 659–679 (KSHI…NSKD), 720–754 (TEGH…STAS), 773–795 (VQVF…PEDL), and 817–842 (SCSQ…GSEE). A phosphoserine mark is found at Ser660 and Ser666. Low complexity predominate over residues 730 to 751 (SSCMSSSRPSISSSEENESAQS). Residues 773 to 785 (VQVFSRSESTQPL) are compositionally biased toward polar residues. Ser781, Ser788, Ser828, and Ser838 each carry phosphoserine.

This sequence belongs to the type I cytokine receptor family. Type 2 subfamily. As to quaternary structure, component of a hexamer of two molecules each of IL6, IL6R and IL6ST; associates with the complex IL6:IL6R but does not interact with IL6. Forms heterodimers composed of LIFR and IL6ST (type I OSM receptor) which are activated by LIF and OSM. Also forms heterodimers composed of OSMR and IL6ST (type II receptor) which are activated by OSM but not by LIF. Interacts with HCK. Interacts with INPP5D/SHIP1. Interacts with SRC and YES. Interacts with ARMH4; this interaction prevents IL6ST protein homodimerization and bridges ARMH4 with IL6R and STAT3 and therefore inhibits phosphorylation of STAT3 at 'Tyr-705'. Phosphorylation of Ser-781 down-regulates cell surface expression. In terms of processing, heavily N-glycosylated. Glycosylation is required for protein stability and localization in plasma membrane but not for ligand binding. As to expression, found in hepatocytes, astrocytes, fibroblasts and endothelial cells.

The protein localises to the cell membrane. Functionally, signal-transducing molecule. The receptor systems for IL6, LIF, OSM, CNTF, IL11, CTF1 and BSF3 can utilize IL6ST for initiating signal transmission. Binding of IL6 to IL6R induces IL6ST homodimerization and formation of a high-affinity receptor complex, which activates the intracellular JAK-MAPK and JAK-STAT3 signaling pathways. That causes phosphorylation of IL6ST tyrosine residues which in turn activates STAT3. In parallel, the IL6 signaling pathway induces the expression of two cytokine receptor signaling inhibitors, SOCS1 and SOCS3, which inhibit JAK and terminate the activity of the IL6 signaling pathway as a negative feedback loop. Also activates the yes-associated protein 1 (YAP) and NOTCH pathways to control inflammation-induced epithelial regeneration, independently of STAT3. Mediates signals which regulate immune response, hematopoiesis, pain control and bone metabolism. Has a role in embryonic development. Essential for survival of motor and sensory neurons and for differentiation of astrocytes. Required for expression of TRPA1 in nociceptive neurons. Required for the maintenance of PTH1R expression in the osteoblast lineage and for the stimulation of PTH-induced osteoblast differentiation. Required for normal trabecular bone mass and cortical bone composition. The chain is Interleukin-6 receptor subunit beta from Rattus norvegicus (Rat).